Here is a 213-residue protein sequence, read N- to C-terminus: Ras-related protein Rab-4B (213 aa).

Ala2 bears the N-acetylalanine mark. The GDP site is built by Gly18, Thr19, Gly20, Lys21, Ser22, and Cys23. The GTP site is built by Gly18, Thr19, Gly20, Lys21, Ser22, Cys23, Ser37, His39, and Thr40. Residue Ser22 participates in Mg(2+) binding. The short motif at 39 to 44 is the Switch 1 element; that stretch reads HTIGVE. Mg(2+) contacts are provided by Thr40 and Asp63. The short motif at 65 to 74 is the Switch 2 element; that stretch reads AGQERFRSVT. Position 66 (Gly66) interacts with GTP. Residue Gln67 is modified to 5-glutamyl serotonin. Positions 121, 122, 124, 152, and 153 each coordinate GDP. 5 residues coordinate GTP: Asn121, Lys122, Asp124, Ala152, and Leu153. Phosphoserine occurs at positions 185 and 193. Residues Cys211 and Cys213 are each lipidated (S-geranylgeranyl cysteine). Residue Cys213 is modified to Cysteine methyl ester.

Belongs to the small GTPase superfamily. Rab family. In terms of assembly, interacts (GTP-bound form) with RUFY1; the interaction allows endosomal tethering and fusion. Mg(2+) serves as cofactor. Post-translationally, serotonylation of Gln-67 by TGM2 during activation and aggregation of platelets leads to constitutive activation of GTPase activity.

The protein resides in the cell membrane. It is found in the early endosome membrane. It catalyses the reaction GTP + H2O = GDP + phosphate + H(+). Regulated by guanine nucleotide exchange factors (GEFs) which promote the exchange of bound GDP for free GTP. Regulated by GTPase activating proteins (GAPs) which increase the GTP hydrolysis activity. Inhibited by GDP dissociation inhibitors (GDIs). In terms of biological role, the small GTPases Rab are key regulators of intracellular membrane trafficking, from the formation of transport vesicles to their fusion with membranes. Rabs cycle between an inactive GDP-bound form and an active GTP-bound form that is able to recruit to membranes different set of downstream effectors directly responsible for vesicle formation, movement, tethering and fusion. RAB4B mediates endosomal tethering and fusion through the interaction with RUFY1 and RAB14. Acts as a regulator of platelet alpha-granule release during activation and aggregation of platelets. The sequence is that of Ras-related protein Rab-4B from Homo sapiens (Human).